Reading from the N-terminus, the 315-residue chain is Leukocidin-S subunit (315 aa).

Residues 1–29 (MLKNKILATTLSVSLLAPLANPLLENAKA) form the signal peptide.

The protein belongs to the aerolysin family. In terms of assembly, leukocidin consists of two protein components: F and S.

Its function is as follows. Leukocidin causes cytotoxic changes in polymorphonuclear leukocytes. The chain is Leukocidin-S subunit (lukS) from Staphylococcus aureus.